Consider the following 72-residue polypeptide: Disintegrin basilicin (72 aa).

A Disintegrin domain is found at 1-72 (AGEECDCGSP…ADCPRNHFHA (72 aa)). Cystine bridges form between cysteine 5–cysteine 20, cysteine 7–cysteine 15, cysteine 14–cysteine 37, cysteine 28–cysteine 34, cysteine 33–cysteine 58, and cysteine 46–cysteine 65. Residues 50-52 (RGD) carry the Cell attachment site motif.

This sequence belongs to the venom metalloproteinase (M12B) family. P-II subfamily. P-IIa sub-subfamily. In terms of assembly, monomer (disintegrin). As to expression, expressed by the venom gland.

It is found in the secreted. In terms of biological role, inhibits fibrinogen interaction with platelets. Acts by binding to alpha-IIb/beta-3 (ITGA2B/ITGB3) on the platelet surface and inhibits aggregation induced by ADP, thrombin, platelet-activating factor and collagen. This chain is Disintegrin basilicin, found in Crotalus basiliscus (Mexican west-coast rattlesnake).